We begin with the raw amino-acid sequence, 257 residues long: Acetylglutamate kinase (257 aa).

Substrate is bound by residues 43-44 (GG), R65, and N157.

The protein belongs to the acetylglutamate kinase family. ArgB subfamily.

It localises to the cytoplasm. The catalysed reaction is N-acetyl-L-glutamate + ATP = N-acetyl-L-glutamyl 5-phosphate + ADP. It functions in the pathway amino-acid biosynthesis; L-arginine biosynthesis; N(2)-acetyl-L-ornithine from L-glutamate: step 2/4. Catalyzes the ATP-dependent phosphorylation of N-acetyl-L-glutamate. The sequence is that of Acetylglutamate kinase from Mannheimia succiniciproducens (strain KCTC 0769BP / MBEL55E).